The primary structure comprises 404 residues: Zinc metalloprotease Rip1 (404 aa).

A helical transmembrane segment spans residues 1–21 (MMFVTGIVLFALAILISVALH). Residue His-21 coordinates Zn(2+). Glu-22 is an active-site residue. His-25 contacts Zn(2+). Residues 104-124 (PGMNLAICLVLIYAIALVWGL) form a helical membrane-spanning segment. Residues 121 to 203 (VWGLPNLHPP…SVPIVVERDG (83 aa)) enclose the PDZ domain. Asp-202 is a binding site for Zn(2+). 2 consecutive transmembrane segments (helical) span residues 313–333 (LWVAFWFFLAQLNLILAAINL) and 373–393 (LLPATYVVLVLVVGYMLLTVT).

Belongs to the peptidase M50B family. Zn(2+) is required as a cofactor.

The protein resides in the cell membrane. Functionally, a probable site-2 protease (S2P) that cleaves type-2 transmembrane proteins within their membrane-spanning domains. Degrades anti-sigma factors RskA, RslA and RsmA, releasing sigma factors SigK, SigL and SigM from the cellular membrane, activating signaling pathways. Does not act on RsdA. Regulates the composition of extractable mycolic acids in the cell envelope in response to changes in membrane fluidity. Mediates transcriptional regulation of mycolic acid biosynthetic genes in response to detergent. Probably also cleaves PbpB (PBP3, FtsI); this cleavage is inhibited by Wag31-PbpBI interaction. Its function is as follows. Regulated intramembrane proteolysis (RIP) occurs when an extracytoplasmic signal (possibly oxidative stress) triggers a concerted proteolytic cascade to transmit information and elicit cellular responses. The membrane-spanning regulatory substrate protein (includes anti-sigma factors RskA, RslA, RsmA, and PbpB) is first cut extracytoplasmically (site-1 protease, S1P), then within the membrane itself (site-2 protease, S2P, this entry), while cytoplasmic proteases finish degrading the regulatory protein, liberating the effector protein (ECF sigma factors SigK, SigL and SigM). This is Zinc metalloprotease Rip1 (rip1) from Mycobacterium tuberculosis (strain ATCC 35801 / TMC 107 / Erdman).